Reading from the N-terminus, the 241-residue chain is Anthocyanidin 3-O-glucosyltransferase 4 (241 aa).

Q104, H119, W122, N123, S124, and E127 together coordinate UDP-alpha-D-glucose. A142 provides a ligand contact to an anthocyanidin. UDP-alpha-D-glucose contacts are provided by E143 and Q144.

Belongs to the UDP-glycosyltransferase family. Faintly expressed in cotyledons, roots and leaves.

It carries out the reaction an anthocyanidin + UDP-alpha-D-glucose + H(+) = an anthocyanidin 3-O-beta-D-glucoside + UDP. It functions in the pathway pigment biosynthesis; anthocyanin biosynthesis. Its function is as follows. In the presence of other necessary color factors, this glycosylation reaction allows the accumulation of anthocyanin pigments. The chain is Anthocyanidin 3-O-glucosyltransferase 4 (GT4) from Manihot esculenta (Cassava).